The sequence spans 76 residues: DNA-directed RNA polymerase subunit omega (76 aa).

Belongs to the RNA polymerase subunit omega family. In terms of assembly, the RNAP catalytic core consists of 2 alpha, 1 beta, 1 beta' and 1 omega subunit. When a sigma factor is associated with the core the holoenzyme is formed, which can initiate transcription.

It carries out the reaction RNA(n) + a ribonucleoside 5'-triphosphate = RNA(n+1) + diphosphate. Its function is as follows. Promotes RNA polymerase assembly. Latches the N- and C-terminal regions of the beta' subunit thereby facilitating its interaction with the beta and alpha subunits. The chain is DNA-directed RNA polymerase subunit omega from Staphylococcus carnosus (strain TM300).